The primary structure comprises 439 residues: Xylose isomerase (439 aa).

Catalysis depends on residues H101 and D104. Mg(2+) is bound by residues E232, E268, H271, D296, D307, D309, and D339.

It belongs to the xylose isomerase family. As to quaternary structure, homotetramer. The cofactor is Mg(2+).

The protein localises to the cytoplasm. The enzyme catalyses alpha-D-xylose = alpha-D-xylulofuranose. The polypeptide is Xylose isomerase (Haemophilus influenzae (strain 86-028NP)).